We begin with the raw amino-acid sequence, 65 residues long: Excisionase (65 aa).

Positions 45–65 (GNPNRWRSESIKEWEDKKKIN) are disordered. Residues 50 to 65 (WRSESIKEWEDKKKIN) show a composition bias toward basic and acidic residues.

Excisionase and integrase are necessary for the excision of prophage from the host genome by site-specific recombination at the att site. The protein is Excisionase (xis) of Escherichia coli (Bacteriophage phi-80).